The sequence spans 77 residues: MARVCQVTGKGPMVGNNVSHANNKTKRRFLPNLHYRRFWLETENRWVRLRISNAALRLIDKVGIEQVVADLRARGEL.

This sequence belongs to the bacterial ribosomal protein bL28 family.

The chain is Large ribosomal subunit protein bL28 from Leptothrix cholodnii (strain ATCC 51168 / LMG 8142 / SP-6) (Leptothrix discophora (strain SP-6)).